A 315-amino-acid polypeptide reads, in one-letter code: Glutathione synthetase (315 aa).

Residues 125–310 (KLFTAWFSEF…ITGMLFDAIE (186 aa)) enclose the ATP-grasp domain. 151–207 (HQAKGDIILKPLDGMGGTSIFRVKQDDPNLGVIIETLTQYGNQYAMAQAFIPEITKG) is a binding site for ATP. 2 residues coordinate Mg(2+): Glu-281 and Asn-283.

The protein belongs to the prokaryotic GSH synthase family. It depends on Mg(2+) as a cofactor. Mn(2+) is required as a cofactor.

The catalysed reaction is gamma-L-glutamyl-L-cysteine + glycine + ATP = glutathione + ADP + phosphate + H(+). It participates in sulfur metabolism; glutathione biosynthesis; glutathione from L-cysteine and L-glutamate: step 2/2. This Shewanella oneidensis (strain ATCC 700550 / JCM 31522 / CIP 106686 / LMG 19005 / NCIMB 14063 / MR-1) protein is Glutathione synthetase.